Consider the following 179-residue polypeptide: Signal peptidase complex subunit 2 (179 aa).

At 1 to 48 the chain is on the cytoplasmic side; that stretch reads MSGNNVQEEDSTFHVSNLYSETEIKKITQDFISEKIREQNFEEIVKYS. A helical transmembrane segment spans residues 49 to 69; that stretch reads NIRIFLSLVLIVIGTYCSIFV. The Extracellular segment spans residues 70-74; it reads QYKKN. Residues 75-95 traverse the membrane as a helical segment; the sequence is PVIMIQLLVAFFVVSTTLIIF. Residues 96 to 179 lie on the Cytoplasmic side of the membrane; it reads EYFFFDDVFM…AHGRTLKLKN (84 aa).

This sequence belongs to the SPCS2 family. Component of the signal peptidase complex (SPC) composed of a catalytic subunit SEC11/SPC21 and three accessory subunits SPC25, SPC3/SPC22, SPC1/SPC12. The complex induces a local thinning of the ER membrane which is used to measure the length of the signal peptide (SP) h-region of protein substrates. This ensures the selectivity of the complex towards h-regions shorter than 18-20 amino acids. Within the complex, interacts with SEC11/SPC21. Component of a complex composed of SPC25 and PMV; the interaction is mediated via the transmembrane domains. The complex interacts with the SEC61 channel-forming translocon complex and is involved in the recognition and import of PEXEL motif-containing proteins into the ER for subsequent export.

It localises to the endoplasmic reticulum membrane. Component of the signal peptidase complex (SPC) which catalyzes the cleavage of N-terminal signal sequences from nascent proteins as they are translocated into the lumen of the endoplasmic reticulum. Enhances the enzymatic activity of SPC and facilitates the interactions between different components of the translocation site. Also, regulatory component of the CSP25-plasmepsin PMV complex which cleaves the pentameric localization motif RxLxE/Q/D (termed Plasmodium export element (PEXEL)) located downstream of the N-terminal secretory signal sequence of several proteins. The chain is Signal peptidase complex subunit 2 from Plasmodium falciparum (isolate 3D7).